Reading from the N-terminus, the 252-residue chain is Phosphatidylserine decarboxylase proenzyme (252 aa).

Residue Ser211 is the Schiff-base intermediate with substrate; via pyruvic acid of the active site. Residue Ser211 is modified to Pyruvic acid (Ser); by autocatalysis.

The protein belongs to the phosphatidylserine decarboxylase family. PSD-A subfamily. Heterodimer of a large membrane-associated beta subunit and a small pyruvoyl-containing alpha subunit. Requires pyruvate as cofactor. Is synthesized initially as an inactive proenzyme. Formation of the active enzyme involves a self-maturation process in which the active site pyruvoyl group is generated from an internal serine residue via an autocatalytic post-translational modification. Two non-identical subunits are generated from the proenzyme in this reaction, and the pyruvate is formed at the N-terminus of the alpha chain, which is derived from the carboxyl end of the proenzyme. The post-translation cleavage follows an unusual pathway, termed non-hydrolytic serinolysis, in which the side chain hydroxyl group of the serine supplies its oxygen atom to form the C-terminus of the beta chain, while the remainder of the serine residue undergoes an oxidative deamination to produce ammonia and the pyruvoyl prosthetic group on the alpha chain.

The protein localises to the cell membrane. The catalysed reaction is a 1,2-diacyl-sn-glycero-3-phospho-L-serine + H(+) = a 1,2-diacyl-sn-glycero-3-phosphoethanolamine + CO2. Its pathway is phospholipid metabolism; phosphatidylethanolamine biosynthesis; phosphatidylethanolamine from CDP-diacylglycerol: step 2/2. Catalyzes the formation of phosphatidylethanolamine (PtdEtn) from phosphatidylserine (PtdSer). This Novosphingobium aromaticivorans (strain ATCC 700278 / DSM 12444 / CCUG 56034 / CIP 105152 / NBRC 16084 / F199) protein is Phosphatidylserine decarboxylase proenzyme.